Consider the following 565-residue polypeptide: Transmembrane 7 superfamily member 3 (565 aa).

Residues 1–21 form the signal peptide; sequence MWRLRLLVLAVLAAGSAEAQA. 4 N-linked (GlcNAc...) asparagine glycosylation sites follow: N22, N56, N70, and N259. Transmembrane regions (helical) follow at residues 287 to 307, 311 to 331, 341 to 361, 364 to 384, 402 to 422, 427 to 447, and 478 to 498; these read VSTK…CFFG, WKTE…YILI, VRLV…VASW, FGIL…LVSS, VFWV…LGCL, ILAC…SYMF, and NDYI…TLQI.

Its subcellular location is the cell membrane. In terms of biological role, involved in the inhibition of cytokine-induced death of pancreatic beta cells. Involved in the promotion of insulin secretion from pancreatic beta cells. Is a downstream transcriptional target of p53/TP53, and acts as a pro-survival homeostatic factor that attenuates the development of cellular stress. Maintains protein homeostasis and promotes cell survival through attenuation of endoplasmic reticulum (ER) stress and the subsequent induction of unfolded protein response (UPR). In Rattus norvegicus (Rat), this protein is Transmembrane 7 superfamily member 3 (Tm7sf3).